Consider the following 405-residue polypeptide: Nicotinate phosphoribosyltransferase (405 aa).

His224 carries the post-translational modification Phosphohistidine; by autocatalysis.

The protein belongs to the NAPRTase family. In terms of processing, transiently phosphorylated on a His residue during the reaction cycle. Phosphorylation strongly increases the affinity for substrates and increases the rate of nicotinate D-ribonucleotide production. Dephosphorylation regenerates the low-affinity form of the enzyme, leading to product release.

The enzyme catalyses nicotinate + 5-phospho-alpha-D-ribose 1-diphosphate + ATP + H2O = nicotinate beta-D-ribonucleotide + ADP + phosphate + diphosphate. The protein operates within cofactor biosynthesis; NAD(+) biosynthesis; nicotinate D-ribonucleotide from nicotinate: step 1/1. In terms of biological role, catalyzes the synthesis of beta-nicotinate D-ribonucleotide from nicotinate and 5-phospho-D-ribose 1-phosphate at the expense of ATP. This is Nicotinate phosphoribosyltransferase from Methanococcoides burtonii (strain DSM 6242 / NBRC 107633 / OCM 468 / ACE-M).